A 309-amino-acid chain; its full sequence is Zinc finger CCCH domain-containing protein 31 (309 aa).

Positions 1–36 (MEGAGAARKRSRPDTANGGAAGGKRSRETESFQTGL) are disordered. 2 C3H1-type zinc fingers span residues 37–65 (SSKLKPCTKFFSTIGCPFGEGCHFSHFVP) and 103–131 (SGKTRMCTKYNTAEGCKFGDKCHFAHGER). The segment at 86 to 106 (ARAPMDHAAGGNSHPASSGKT) is disordered. Positions 175 to 239 (SATAKISVDA…DQIKQASNMV (65 aa)) constitute a KH domain. Residues 249-273 (STPAKKPAGSAAGAAPAGRGGPGGR) form a disordered region. A compositionally biased stretch (low complexity) spans 251–265 (PAKKPAGSAAGAAPA). Residues 275–302 (NYKTKLCENFVKGTCTFGDRCHFAHGEN) form a C3H1-type 3 zinc finger.

The polypeptide is Zinc finger CCCH domain-containing protein 31 (Oryza sativa subsp. japonica (Rice)).